Consider the following 244-residue polypeptide: 5'-nucleotidase SurE 2 (244 aa).

A divalent metal cation contacts are provided by aspartate 8, aspartate 9, serine 39, and asparagine 96.

The protein belongs to the SurE nucleotidase family. It depends on a divalent metal cation as a cofactor.

The protein localises to the cytoplasm. It catalyses the reaction a ribonucleoside 5'-phosphate + H2O = a ribonucleoside + phosphate. Nucleotidase that shows phosphatase activity on nucleoside 5'-monophosphates. This Thermus thermophilus (strain ATCC BAA-163 / DSM 7039 / HB27) protein is 5'-nucleotidase SurE 2.